The primary structure comprises 393 residues: tRNA(Met) cytidine acetate ligase (393 aa).

ATP is bound by residues glycine 81, asparagine 142, and arginine 167.

It belongs to the TmcAL family.

It is found in the cytoplasm. The enzyme catalyses cytidine(34) in elongator tRNA(Met) + acetate + ATP = N(4)-acetylcytidine(34) in elongator tRNA(Met) + AMP + diphosphate. Functionally, catalyzes the formation of N(4)-acetylcytidine (ac(4)C) at the wobble position of elongator tRNA(Met), using acetate and ATP as substrates. First activates an acetate ion to form acetyladenylate (Ac-AMP) and then transfers the acetyl group to tRNA to form ac(4)C34. This chain is tRNA(Met) cytidine acetate ligase, found in Bacillus cereus (strain 03BB102).